The chain runs to 234 residues: MKKILIVDDEKPISDIIKFNMTKEGYEVVTAFNGREALEQFEAEQPDIIILDLMLPEIDGLEVAKTIRKTSSVPILMLSAKDSEFDKVIGLELGADDYVTKPFSNRELQARVKALLRRSQPMPVDGQEADSKPQPIQIGDLEIVPDAYVAKKYGEELDLTHREFELLYHLASHTGQVITREHLLETVWGYDYFGDVRTVDVTVRRLREKIEDTPSRPEYILTRRGVGYYMRNNA.

The 114-residue stretch at 3–116 (KILIVDDEKP…ELQARVKALL (114 aa)) folds into the Response regulatory domain. Asp52 bears the 4-aspartylphosphate mark. Residues 133 to 232 (PQPIQIGDLE…RRGVGYYMRN (100 aa)) constitute a DNA-binding region (ompR/PhoB-type).

In terms of assembly, monomer. Homodimer. Post-translationally, phosphorylated by WalK; can also be dephosphorylated by WalK.

The protein localises to the cytoplasm. Member of the two-component regulatory system WalK/WalR that regulates genes involved in cell wall metabolism. Binds to the promoter region of the transcription factor fabT gene in the fabTH-acp operon in vitro. Inhibits transcription of fabT, probably acting in an unphosphorylated form, thereby playing a role in the regulation of fatty acid biosynthesis. Essential for normal growth in vitro. Required for maintaining normal cellular morphology, acting, at least in part, by regulating peptidoglycan hydrolase pcsB. Involved in maintaining expression of WalRK regulon genes in exponentially growing cells. This is Transcriptional regulatory protein WalR from Streptococcus pneumoniae serotype 2 (strain D39 / NCTC 7466).